The following is a 211-amino-acid chain: Thiamine-phosphate synthase (211 aa).

Residues 37–41 (QLRIK) and asparagine 69 contribute to the 4-amino-2-methyl-5-(diphosphooxymethyl)pyrimidine site. Mg(2+)-binding residues include aspartate 70 and aspartate 89. Serine 108 contributes to the 4-amino-2-methyl-5-(diphosphooxymethyl)pyrimidine binding site. 2-[(2R,5Z)-2-carboxy-4-methylthiazol-5(2H)-ylidene]ethyl phosphate is bound at residue 134-136 (TQT). Residue lysine 137 coordinates 4-amino-2-methyl-5-(diphosphooxymethyl)pyrimidine. 2-[(2R,5Z)-2-carboxy-4-methylthiazol-5(2H)-ylidene]ethyl phosphate contacts are provided by residues glycine 166 and 186 to 187 (VS).

It belongs to the thiamine-phosphate synthase family. Mg(2+) is required as a cofactor.

The catalysed reaction is 2-[(2R,5Z)-2-carboxy-4-methylthiazol-5(2H)-ylidene]ethyl phosphate + 4-amino-2-methyl-5-(diphosphooxymethyl)pyrimidine + 2 H(+) = thiamine phosphate + CO2 + diphosphate. It carries out the reaction 2-(2-carboxy-4-methylthiazol-5-yl)ethyl phosphate + 4-amino-2-methyl-5-(diphosphooxymethyl)pyrimidine + 2 H(+) = thiamine phosphate + CO2 + diphosphate. The enzyme catalyses 4-methyl-5-(2-phosphooxyethyl)-thiazole + 4-amino-2-methyl-5-(diphosphooxymethyl)pyrimidine + H(+) = thiamine phosphate + diphosphate. It participates in cofactor biosynthesis; thiamine diphosphate biosynthesis; thiamine phosphate from 4-amino-2-methyl-5-diphosphomethylpyrimidine and 4-methyl-5-(2-phosphoethyl)-thiazole: step 1/1. In terms of biological role, condenses 4-methyl-5-(beta-hydroxyethyl)thiazole monophosphate (THZ-P) and 2-methyl-4-amino-5-hydroxymethyl pyrimidine pyrophosphate (HMP-PP) to form thiamine monophosphate (TMP). The polypeptide is Thiamine-phosphate synthase (Citrobacter koseri (strain ATCC BAA-895 / CDC 4225-83 / SGSC4696)).